A 615-amino-acid polypeptide reads, in one-letter code: Cysteine-rich receptor-like protein kinase 1 (615 aa).

A signal peptide spans methionine 1 to serine 28. Gnk2-homologous domains follow at residues serine 29 to phenylalanine 131 and aspartate 137 to phenylalanine 237. Over serine 29–aspartate 266 the chain is Extracellular. N-linked (GlcNAc...) asparagine glycosylation is found at asparagine 100 and asparagine 165. The chain crosses the membrane as a helical span at residues valine 267–isoleucine 287. Residues serine 288–valine 615 lie on the Cytoplasmic side of the membrane. The Protein kinase domain occupies phenylalanine 318 to leucine 602. Residues leucine 324 to valine 332 and lysine 346 each bind ATP. Aspartate 443 serves as the catalytic Proton acceptor.

It belongs to the protein kinase superfamily. Ser/Thr protein kinase family. CRK subfamily. In terms of tissue distribution, expressed in the whole plant at low levels.

It is found in the membrane. It carries out the reaction L-seryl-[protein] + ATP = O-phospho-L-seryl-[protein] + ADP + H(+). It catalyses the reaction L-threonyl-[protein] + ATP = O-phospho-L-threonyl-[protein] + ADP + H(+). The chain is Cysteine-rich receptor-like protein kinase 1 from Arabidopsis thaliana (Mouse-ear cress).